Reading from the N-terminus, the 515-residue chain is Probable 2-isopropylmalate synthase (515 aa).

The Pyruvate carboxyltransferase domain occupies valine 20–valine 271. Residues aspartate 29, histidine 209, histidine 211, and asparagine 245 each coordinate a divalent metal cation.

It belongs to the alpha-IPM synthase/homocitrate synthase family. As to quaternary structure, homodimer. Requires a divalent metal cation as cofactor.

It carries out the reaction 3-methyl-2-oxobutanoate + acetyl-CoA + H2O = (2S)-2-isopropylmalate + CoA + H(+). It participates in amino-acid biosynthesis; L-leucine biosynthesis; L-leucine from 3-methyl-2-oxobutanoate: step 1/4. Functionally, catalyzes the condensation of the acetyl group of acetyl-CoA with 3-methyl-2-oxobutanoate (2-oxoisovalerate) to form 3-carboxy-3-hydroxy-4-methylpentanoate (2-isopropylmalate). In Methanosarcina acetivorans (strain ATCC 35395 / DSM 2834 / JCM 12185 / C2A), this protein is Probable 2-isopropylmalate synthase (leuA).